Reading from the N-terminus, the 572-residue chain is Urocanate hydratase (572 aa).

NAD(+) is bound by residues 48 to 49 (GG), glutamine 126, 172 to 174 (GMG), aspartate 192, 238 to 239 (NA), 259 to 263 (QTSAH), 268 to 269 (YL), and tyrosine 317. The active site involves cysteine 405. Glycine 487 is an NAD(+) binding site. Basic and acidic residues predominate over residues 550 to 559 (EGDEAHEGDA). Residues 550–572 (EGDEAHEGDAAHGSGAAREGDGV) form a disordered region.

The protein belongs to the urocanase family. The cofactor is NAD(+).

It localises to the cytoplasm. The enzyme catalyses 4-imidazolone-5-propanoate = trans-urocanate + H2O. It functions in the pathway amino-acid degradation; L-histidine degradation into L-glutamate; N-formimidoyl-L-glutamate from L-histidine: step 2/3. Its function is as follows. Catalyzes the conversion of urocanate to 4-imidazolone-5-propionate. The sequence is that of Urocanate hydratase from Streptomyces coelicolor (strain ATCC BAA-471 / A3(2) / M145).